A 484-amino-acid chain; its full sequence is Pyruvate kinase (484 aa).

Arg33 contributes to the substrate binding site. Residues Asn35, Ser37, Asp67, and Thr68 each coordinate K(+). 35 to 38 is a binding site for ATP; sequence NFSH. 2 residues coordinate ATP: Arg74 and Lys155. Glu221 provides a ligand contact to Mg(2+). Substrate is bound by residues Gly244, Asp245, and Thr277. Asp245 is a binding site for Mg(2+).

It belongs to the pyruvate kinase family. Homotetramer. Mg(2+) is required as a cofactor. K(+) serves as cofactor.

It carries out the reaction pyruvate + ATP = phosphoenolpyruvate + ADP + H(+). It participates in carbohydrate degradation; glycolysis; pyruvate from D-glyceraldehyde 3-phosphate: step 5/5. The protein is Pyruvate kinase (pyk) of Chlamydia pneumoniae (Chlamydophila pneumoniae).